The following is a 133-amino-acid chain: Histone H2A.1 (133 aa).

A disordered region spans residues 1–23 (MSTTGKGGKAKGKTASSKQVSRS). At Ser-2 the chain carries N-acetylserine. N6-acetyllysine is present on residues Lys-6, Lys-9, Lys-11, Lys-13, and Lys-18. Phosphoserine is present on Ser-123. Lys-124 is covalently cross-linked (Glycyl lysine isopeptide (Lys-Gly) (interchain with G-Cter in ubiquitin)). Ser-129 is modified (phosphoserine).

Belongs to the histone H2A family. The nucleosome is a histone octamer containing two molecules each of H2A, H2B, H3 and H4 assembled in one H3-H4 heterotetramer and two H2A-H2B heterodimers. The octamer wraps approximately 147 bp of DNA. Monoubiquitination of Lys-124 gives a specific tag for epigenetic transcriptional repression. In terms of processing, acetylation occurs almost exclusively in the MAC.

The protein localises to the nucleus. The protein resides in the chromosome. Core component of nucleosome. Nucleosomes wrap and compact DNA into chromatin, limiting DNA accessibility to the cellular machineries which require DNA as a template. Histones thereby play a central role in transcription regulation, DNA repair, DNA replication and chromosomal stability. DNA accessibility is regulated via a complex set of post-translational modifications of histones, also called histone code, and nucleosome remodeling. The chain is Histone H2A.1 (HTA2) from Tetrahymena pyriformis.